Reading from the N-terminus, the 134-residue chain is MEYDDMLDRAMEETPEIDGTSERFEVPDPDIRQEGNVTVYENFQSTCSRLGREDDHVMKFLQNDLGTSGHIDESGRVRLTGEFDATRIEASIDEYVDEFVLCSECGLPDTQLEREQGALLLRCEACGARSATSE.

Over residues Met-1–Glu-12 the composition is skewed to basic and acidic residues. The interval Met-1 to Asp-28 is disordered.

It belongs to the eIF-2-beta/eIF-5 family. In terms of assembly, heterotrimer composed of an alpha, a beta and a gamma chain.

Functionally, eIF-2 functions in the early steps of protein synthesis by forming a ternary complex with GTP and initiator tRNA. The protein is Translation initiation factor 2 subunit beta of Haloarcula marismortui (strain ATCC 43049 / DSM 3752 / JCM 8966 / VKM B-1809) (Halobacterium marismortui).